A 486-amino-acid chain; its full sequence is MTAISNHIDTIIKLNPDYTQMDAVYLTNKLLNLIGDAALELPGDTDPLTNLDLMVKAAQDNGKIPDSQAARQILEAQLMDFATPTPSRINQLFWDKYQAGPRVATDWFFALSRANNYIQTRAIAKNVVFPAKTEYGDLEITINLSKPEKDPKDIAAAAHATQSGYPACALCLQTEGYAGRTDFAARTNHRVIRFLLGGKTWGFQYSPYAYFNEHAIFLDAIHEPMVIDQSTFSNLLNIVTMFPTYFVGSNADLPIVGGSMLAHEHYQGGRHTFPMAKAPIETQVEISGHPHVFAGIVKWPMSVIRLVSADSDELINAAEHVRQVWNQYTDETVDVRAFVDGKPHHTVTPIARRVGTEFQLDLVLRDNQTSAQYPDGIFHPHQDVQHIKKENIGLIEVMGRAILPARLKSELAEVQKYLLGEANTMKPMHQAWADQLKAKYDWTPANAEIQMQAAVGRVFARVLEDAGVFKRDEVGQKAFARFCRAL.

It belongs to the galactose-1-phosphate uridylyltransferase type 2 family.

It localises to the cytoplasm. The catalysed reaction is alpha-D-galactose 1-phosphate + UDP-alpha-D-glucose = alpha-D-glucose 1-phosphate + UDP-alpha-D-galactose. It functions in the pathway carbohydrate metabolism; galactose metabolism. In Lacticaseibacillus paracasei (strain ATCC 334 / BCRC 17002 / CCUG 31169 / CIP 107868 / KCTC 3260 / NRRL B-441) (Lactobacillus paracasei), this protein is Galactose-1-phosphate uridylyltransferase.